The following is a 1099-amino-acid chain: Solute carrier family 12 member 1 (1099 aa).

The Cytoplasmic portion of the chain corresponds to 1 to 177; that stretch reads MSLNNSSSVF…EDNKAGAVKF (177 aa). Residues 20 to 23 carry the RFXV motif motif; the sequence is RFQV. Phosphoserine is present on residues Ser60 and Ser90. Residues Thr94, Thr99, Thr104, and Thr117 each carry the phosphothreonine modification. Ser119 is modified (phosphoserine). At Ser129 the chain carries Phosphoserine; by AMPK. Ser147 is modified (phosphoserine). The interval 147 to 169 is disordered; that stretch reads SADRVANGEGMPGEEHAENKEED. Residues 159–169 show a composition bias toward basic and acidic residues; the sequence is GEEHAENKEED. The helical transmembrane segment at 178 to 198 threads the bilayer; it reads GWVKGVLVRCMLNIWGVMLFI. Residues 199 to 201 lie on the Extracellular side of the membrane; the sequence is RLS. The helical transmembrane segment at 202–222 threads the bilayer; that stretch reads WIVGEAGIGLGVVIILLSTMV. At 223–259 the chain is on the cytoplasmic side; it reads TSITGLSTSAIATNGFVRGGGAYYLISRSLGPEFGGS. A helical transmembrane segment spans residues 260–280; the sequence is IGLIFAFANAVAVAMYVVGFA. Residues 281–302 are Extracellular-facing; that stretch reads ETVVDLLKESDSMMVDPTNDIR. Residues 303 to 323 traverse the membrane as a helical segment; that stretch reads IIGSITVVILLGISVAGMEWE. Residues 324–327 lie on the Cytoplasmic side of the membrane; the sequence is AKAQ. A helical membrane pass occupies residues 328–348; the sequence is VILLIILLIAIANFFIGTVIP. Over 349-379 the chain is Extracellular; the sequence is SNNEKKSRGFFNYQASIFAENFGPSFTKGEG. Residues 380–400 traverse the membrane as a helical segment; that stretch reads FFSVFAIFFPAATGILAGANI. Residues 401-417 lie on the Cytoplasmic side of the membrane; sequence SGDLEDPQDAIPRGTML. A helical membrane pass occupies residues 418 to 438; sequence AIFITTVAYIGVAICVGACVV. Residues 439 to 550 are Extracellular-facing; it reads RDATGSMNDT…NNEPLRGYIL (112 aa). Asn446 and Asn456 each carry an N-linked (GlcNAc...) asparagine glycan. 2 consecutive transmembrane segments (helical) span residues 551-571 and 572-592; these read TFVI…APII and SNFF…ASYA. Over 593–609 the chain is Extracellular; sequence KSPGWRPAYGIYNMWVS. Residues 610–630 form a helical membrane-spanning segment; it reads LFGAVLCCAVMFVINWWAAVI. The Cytoplasmic portion of the chain corresponds to 631 to 1099; sequence TYVIEFFLYI…NHKNVLTFYS (469 aa).

The protein belongs to the SLC12A transporter family. As to quaternary structure, when phosphorylated, interacts with PPP3CB. In terms of processing, phosphorylated at Ser-90, Thr-99 and Thr-104 by OXSR1/OSR1 and STK39/SPAK downstream of WNK kinases (WNK1, WNK2, WNK3 or WNK4), promoting its activity. As to expression, predominant in kidney. The 3 isoforms are differentially distributed within the kidney: B almost exclusively in cortex, F almost exclusively in medulla, and A about equally distributed.

The protein localises to the apical cell membrane. It carries out the reaction K(+)(out) + 2 chloride(out) + Na(+)(out) = K(+)(in) + 2 chloride(in) + Na(+)(in). Its activity is regulated as follows. Activated following phosphorylation by OXSR1/OSR1 and STK39/SPAK downstream of WNK kinases (WNK1, WNK2, WNK3 or WNK4). Its function is as follows. Renal sodium, potassium and chloride ion cotransporter that mediates the transepithelial NaCl reabsorption in the thick ascending limb and plays an essential role in the urinary concentration and volume regulation. Electrically silent transporter system. This Oryctolagus cuniculus (Rabbit) protein is Solute carrier family 12 member 1 (SLC12A1).